Here is a 343-residue protein sequence, read N- to C-terminus: Isopentenyl-diphosphate delta-isomerase (343 aa).

Substrate is bound at residue 9 to 10 (RK). FMN contacts are provided by residues S67, 68–70 (AMT), S98, and N127. 98 to 100 (SQR) provides a ligand contact to substrate. Q162 is a binding site for substrate. E163 contacts Mg(2+). Residues K194, T224, 273–275 (GVR), and 294–295 (AA) contribute to the FMN site.

Belongs to the IPP isomerase type 2 family. In terms of assembly, homooctamer. Dimer of tetramers. Requires FMN as cofactor. The cofactor is NADPH. Mg(2+) is required as a cofactor.

It localises to the cytoplasm. The enzyme catalyses isopentenyl diphosphate = dimethylallyl diphosphate. In terms of biological role, involved in the biosynthesis of isoprenoids. Catalyzes the 1,3-allylic rearrangement of the homoallylic substrate isopentenyl (IPP) to its allylic isomer, dimethylallyl diphosphate (DMAPP). The polypeptide is Isopentenyl-diphosphate delta-isomerase (Xanthobacter autotrophicus (strain ATCC BAA-1158 / Py2)).